The sequence spans 92 residues: PqqA binding protein (92 aa).

It belongs to the PqqD family. As to quaternary structure, monomer. Interacts with PqqE.

Its pathway is cofactor biosynthesis; pyrroloquinoline quinone biosynthesis. Its function is as follows. Functions as a PqqA binding protein and presents PqqA to PqqE, in the pyrroloquinoline quinone (PQQ) biosynthetic pathway. This chain is PqqA binding protein, found in Xanthomonas axonopodis pv. citri (strain 306).